The primary structure comprises 166 residues: Phosphopantetheine adenylyltransferase (166 aa).

Ser-11 lines the substrate pocket. ATP-binding positions include 11–12 and His-19; that span reads SF. Substrate is bound by residues Lys-43, Ala-76, and Arg-90. Residues 91–93, Glu-101, and 126–132 each bind ATP; these read GLR and LQPVSSS.

This sequence belongs to the bacterial CoaD family. As to quaternary structure, homohexamer. The cofactor is Mg(2+).

The protein resides in the cytoplasm. It catalyses the reaction (R)-4'-phosphopantetheine + ATP + H(+) = 3'-dephospho-CoA + diphosphate. It participates in cofactor biosynthesis; coenzyme A biosynthesis; CoA from (R)-pantothenate: step 4/5. In terms of biological role, reversibly transfers an adenylyl group from ATP to 4'-phosphopantetheine, yielding dephospho-CoA (dPCoA) and pyrophosphate. This chain is Phosphopantetheine adenylyltransferase, found in Streptococcus equi subsp. equi (strain 4047).